Consider the following 159-residue polypeptide: Phosphopantetheine adenylyltransferase (159 aa).

Position 16 (H16) interacts with ATP. Residues K40, M72, and R86 each coordinate substrate. ATP-binding positions include 87-89 (GLR), E97, and 122-128 (YQYLSAS).

Belongs to the bacterial CoaD family. As to quaternary structure, homohexamer. Mg(2+) serves as cofactor.

It is found in the cytoplasm. The catalysed reaction is (R)-4'-phosphopantetheine + ATP + H(+) = 3'-dephospho-CoA + diphosphate. It participates in cofactor biosynthesis; coenzyme A biosynthesis; CoA from (R)-pantothenate: step 4/5. Functionally, reversibly transfers an adenylyl group from ATP to 4'-phosphopantetheine, yielding dephospho-CoA (dPCoA) and pyrophosphate. This Dehalococcoides mccartyi (strain ATCC BAA-2266 / KCTC 15142 / 195) (Dehalococcoides ethenogenes (strain 195)) protein is Phosphopantetheine adenylyltransferase.